Reading from the N-terminus, the 181-residue chain is UPF0302 protein ABC1905 (181 aa).

The protein belongs to the UPF0302 family.

This chain is UPF0302 protein ABC1905, found in Shouchella clausii (strain KSM-K16) (Alkalihalobacillus clausii).